We begin with the raw amino-acid sequence, 557 residues long: MPKRTDIKKILIIGSGPIVIGQAAEFDYSGTQACKALKQEGYEVILVNSNPATIMTDPEMADKTYIEPLTADILEEIIKKERPDALLPTLGGQTGLNLAVELYENGVLERYGVELIGANYEAIKKGEDRELFKETMESIGLKVPESAVVRSVEEGLKAVEKIGFPVILRPAFTLGGTGSSVAYNVEEFKEKLKVALETSPIHEVLLDKSLIGWKEIEFEVVRDKADNVIIVCAIENFDPMGVHTGDSITVAPTQTLTDKEYQMLRDAAIAVIRAIGVDTGGSNIQFALSPESGDFYVIEMNPRVSRSSALASKATGFPIAKVAAKLAVGYTLDELKNDITKFTPASFEPSIDYVVVKIPRFDFAKFPEADRTLTTMMKSVGEVMAIGRTFKEALLKAVRSLELDRYGLAFPKLTNVDKVELERNLINPNDQRLWYIAEAFRRGYSVDEVYELTKIDRWFLYNIEEIVKFEEVLRKEELTPEILRQAKEMGYSDWEIAKIKGITEEEVRKLRKEEGIVPTFKGVDTCAGEFVAYTPYYYSSYERPYYTVDGQEILDED.

Positions 1–402 are carboxyphosphate synthetic domain; that stretch reads MPKRTDIKKI…ALLKAVRSLE (402 aa). Residues Arg129, Arg169, Gly175, Gly176, Lys208, Leu210, Glu215, Gly241, Val242, His243, Gln285, and Glu299 each contribute to the ATP site. Positions 133–328 constitute an ATP-grasp domain; the sequence is KETMESIGLK…IAKVAAKLAV (196 aa). 3 residues coordinate Mg(2+): Gln285, Glu299, and Asn301. Positions 285, 299, and 301 each coordinate Mn(2+). The segment at 403–553 is oligomerization domain; that stretch reads LDRYGLAFPK…PYYTVDGQEI (151 aa).

Belongs to the CarB family. As to quaternary structure, composed of two chains; the small (or glutamine) chain promotes the hydrolysis of glutamine to ammonia, which is used by the large (or ammonia) chain to synthesize carbamoyl phosphate. Tetramer of heterodimers (alpha,beta)4. The cofactor is Mg(2+). Requires Mn(2+) as cofactor.

The catalysed reaction is hydrogencarbonate + L-glutamine + 2 ATP + H2O = carbamoyl phosphate + L-glutamate + 2 ADP + phosphate + 2 H(+). It catalyses the reaction hydrogencarbonate + NH4(+) + 2 ATP = carbamoyl phosphate + 2 ADP + phosphate + 2 H(+). It functions in the pathway amino-acid biosynthesis; L-arginine biosynthesis; carbamoyl phosphate from bicarbonate: step 1/1. Its pathway is pyrimidine metabolism; UMP biosynthesis via de novo pathway; (S)-dihydroorotate from bicarbonate: step 1/3. Large subunit of the glutamine-dependent carbamoyl phosphate synthetase (CPSase). CPSase catalyzes the formation of carbamoyl phosphate from the ammonia moiety of glutamine, carbonate, and phosphate donated by ATP, constituting the first step of 2 biosynthetic pathways, one leading to arginine and/or urea and the other to pyrimidine nucleotides. The large subunit (synthetase) binds the substrates ammonia (free or transferred from glutamine from the small subunit), hydrogencarbonate and ATP and carries out an ATP-coupled ligase reaction, activating hydrogencarbonate by forming carboxy phosphate which reacts with ammonia to form carbamoyl phosphate. This Aquifex aeolicus (strain VF5) protein is Carbamoyl phosphate synthase large chain, N-terminal section (carB1).